The sequence spans 473 residues: Calcium/calmodulin-dependent protein kinase type IV (473 aa).

Serine 12 and serine 13 each carry phosphoserine; by autocatalysis. Positions 46–300 (FEVESELGRG…TFQALQHPWV (255 aa)) constitute a Protein kinase domain. ATP contacts are provided by residues 52-60 (LGRGATSIV) and lysine 75. O-linked (GlcNAc) threonine glycosylation occurs at threonine 57. Residue serine 58 is glycosylated (O-linked (GlcNAc) serine). Residue serine 137 is glycosylated (O-linked (GlcNAc) serine). Aspartate 164 (proton acceptor) is an active-site residue. O-linked (GlcNAc) serine glycosylation is present at serine 189. Threonine 200 bears the Phosphothreonine; by CaMKK1 and CaMKK2 mark. An autoinhibitory domain region spans residues 305–321 (ANFVHMDTAQKKLQEFN). Residues 306–323 (NFVHMDTAQKKLQEFNAR) are PP2A-binding. Residues 322-341 (ARRKLKAAVKAVVASSRLGS) are calmodulin-binding. Phosphoserine; by autocatalysis is present on serine 336. Serine 341 is modified (phosphoserine). Residues 341-350 (SASSSHGSIQ) show a composition bias toward low complexity. Disordered stretches follow at residues 341-368 (SASS…GNED) and 445-473 (EEAA…LPEY). Residues serine 344, serine 345, and serine 356 are each glycosylated (O-linked (GlcNAc) serine). Serine 360 carries the phosphoserine modification.

This sequence belongs to the protein kinase superfamily. CAMK Ser/Thr protein kinase family. CaMK subfamily. Monomer. Interacts with protein phosphatase 2A (PPP2CA/PPP2CB); the interaction is mutually exclusive with binding to Ca(2+)/calmodulin. In terms of processing, phosphorylated by CaMKK1 and CaMKK2 on Thr-200. Dephosphorylated by protein phosphatase 2A. Autophosphorylated on Ser-12 and Ser-13. Glycosylation at Ser-189 modulates the phosphorylation of CaMK4 at Thr-200 and negatively regulates its activity toward CREB1 in basal conditions and during early inomycin stimulation. As to expression, expressed in brain, thymus, CD4 T-cells, testis and epithelial ovarian cancer tissue.

The protein localises to the cytoplasm. The protein resides in the nucleus. The enzyme catalyses L-seryl-[protein] + ATP = O-phospho-L-seryl-[protein] + ADP + H(+). It carries out the reaction L-threonyl-[protein] + ATP = O-phospho-L-threonyl-[protein] + ADP + H(+). With respect to regulation, activated by Ca(2+)/calmodulin. Binding of calmodulin results in conformational change that relieves intrasteric autoinhibition and allows phosphorylation of Thr-200 within the activation loop by CaMKK1 or CaMKK2. Phosphorylation of Thr-200 results in a 10-20-fold increase in total activity to generate Ca(2+)/calmodulin-independent activity. Autophosphorylation of the N-terminus Ser-12 and Ser-13 is required for full activation. Inactivated by protein phosphatase 2A (PPP2CA/PPP2CB) which dephosphorylates Thr-200, thereby terminating autonomous activity and helping to maintain the enzyme in its autoinhibited state. Calcium/calmodulin-dependent protein kinase that operates in the calcium-triggered CaMKK-CaMK4 signaling cascade and regulates, mainly by phosphorylation, the activity of several transcription activators, such as CREB1, MEF2D, JUN and RORA, which play pivotal roles in immune response, inflammation, and memory consolidation. In the thymus, regulates the CD4(+)/CD8(+) double positive thymocytes selection threshold during T-cell ontogeny. In CD4 memory T-cells, is required to link T-cell antigen receptor (TCR) signaling to the production of IL2, IFNG and IL4 (through the regulation of CREB and MEF2). Regulates the differentiation and survival phases of osteoclasts and dendritic cells (DCs). Mediates DCs survival by linking TLR4 and the regulation of temporal expression of BCL2. Phosphorylates the transcription activator CREB1 on 'Ser-133' in hippocampal neuron nuclei and contribute to memory consolidation and long term potentiation (LTP) in the hippocampus. Can activate the MAP kinases MAPK1/ERK2, MAPK8/JNK1 and MAPK14/p38 and stimulate transcription through the phosphorylation of ELK1 and ATF2. Can also phosphorylate in vitro CREBBP, PRM2, MEF2A and STMN1/OP18. This is Calcium/calmodulin-dependent protein kinase type IV (CAMK4) from Homo sapiens (Human).